The sequence spans 993 residues: MPTTGPASIPDDTLEKHTLRSETSTYNLTVGDTGSGLIVFFPGFPGSIVGAHYTLQSNGNYKFDQMLLTAQNLPASYNYCRLVSRSLTVRSSTLPGGVYALNGTINAVTFQGSLSELTDVSYNGLMSATANINDKIGNVLVGEGVTVLSLPTSYDLGYVRLGDPIPAIGLDPKMVATCDSSDRPRVYTITAADDYQFSSQYQPGGVTITLFSANIDAITSLSVGGELVFRTSVHGLVLGATIYLIGFDGTTVITRAVAANTGLTTGTDNLMPFNLVIPTNEITQPITSIKLEIVTSKSGGQAGDQMLWSARGSLAVTIHGGNYPGALRPVTLVAYERVATGSVVTVAGVSNFELIPNPELAKNLVTEYGRFDPGAMNYTKLILSERDRLGIKTVWPTREYTDFREYFMEVADLNSPLKIAGAFGFKDIIRAIRRIAVPVVSTLFPPAAPLAHAIGEGVDYLLGDEAQAASGTARAASGKARAASGRIRQLTLAADKGYEVVANLFQVPQNPVVDGILASPGVLRGAHNLDCVLREGATLFPVVITTVEDAMTPKALNSKMFAVIEGVREDLQPPSQRGSFIRTLSGHRVYGYAPDGVLPLETGRDYTVVPIDDVWDDSIMLSKDPIPPIVGNSGNLAIAYMDVFRPKVPIHVAMTGALNACGEIEKVSFRSTKLATAHRLGLKLAGPGAFDVNTGPNWATFIKRFPHNPRDWDRLPYLNLPYLPPNAGRQYHLAMAASEFKETPELESAVRAMEAAANVDPLFQSALSVFMWLEENGIVTDMANFALSDPNAHRMRNFLANAPQAGSKSQRAKYGTAGYGVEARGPTPEEAQREKDTRISKKMETMGIYFATPEWVALNGHRGPSPGQLKYWQNTREIPDPNEDYLDYVHAEKSRLASEEQILRAATSIYGAPGQAEPPQAFIDEVAKVYEINHGRGPNQEQMKDLLLTAMEMKHRNPRRALPKPKPKPNAPTQRPPGRLGRWIRTVSDEDLE.

Aspartate 11 contacts a divalent metal cation. Positions 494–736 constitute a Peptidase S50 domain; it reads ADKGYEVVAN…AGRQYHLAMA (243 aa). Catalysis depends on serine 633, which acts as the Nucleophile. Residue lysine 673 is part of the active site. Residues 950–993 form a disordered region; the sequence is AMEMKHRNPRRALPKPKPKPNAPTQRPPGRLGRWIRTVSDEDLE. Over residues 956 to 967 the composition is skewed to basic residues; the sequence is RNPRRALPKPKP. The interval 984-993 is interaction with VP1 protein; the sequence is IRTVSDEDLE.

In terms of assembly, homotrimer. A central divalent metal stabilizes the VP2 trimer. Interacts with host ITGA4/ITGB1. Homodimer. Interacts (via C-terminus) with VP1 in the cytoplasm. Interacts with VP2. Post-translationally, specific enzymatic cleavages yield mature proteins. The capsid assembly seems to be regulated by polyprotein processing. The protease VP4 cleaves itself off the polyprotein, thus releasing pre-VP2 and VP3 within the infected cell. During capsid assembly, the C-terminus of pre-VP2 is further processed by VP4, giving rise to VP2, the external capsid protein and three small peptides that all stay closely associated with the capsid.

The protein localises to the virion. Its subcellular location is the host cytoplasm. Functionally, capsid protein VP2 self assembles to form an icosahedral capsid with a T=13 symmetry, about 70 nm in diameter, and consisting of 260 VP2 trimers. The capsid encapsulates the genomic dsRNA. VP2 is also involved in attachment and entry into the host cell by interacting with host ITGA4/ITGB1. In terms of biological role, the precursor of VP2 plays an important role in capsid assembly. First, pre-VP2 and VP2 oligomers assemble to form a procapsid. Then, the pre-VP2 intermediates may be processed into VP2 proteins by proteolytic cleavage mediated by VP4 to obtain the mature virion. The final capsid is composed of pentamers and hexamers but VP2 has a natural tendency to assemble into all-pentameric structures. Therefore pre-VP2 may be required to allow formation of the hexameric structures. Protease VP4 is a serine protease that cleaves the polyprotein into its final products. Pre-VP2 is first partially cleaved, and may be completely processed by VP4 upon capsid maturation. Its function is as follows. Capsid protein VP3 plays a key role in virion assembly by providing a scaffold for the capsid made of VP2. May self-assemble to form a T=4-like icosahedral inner-capsid composed of at least 180 trimers. Plays a role in genomic RNA packaging by recruiting VP1 into the capsid and interacting with the dsRNA genome segments to form a ribonucleoprotein complex. Additionally, the interaction of the VP3 C-terminal tail with VP1 removes the inherent structural blockade of the polymerase active site. Thus, VP3 can also function as a transcriptional activator. Functionally, structural peptide 1 is a small peptide derived from pre-VP2 C-terminus. It destabilizes and perforates cell membranes, suggesting a role during entry. In terms of biological role, structural peptide 2 is a small peptide derived from pVP2 C-terminus. It is not essential for the virus viability, but viral growth is affected when missing. Structural peptide 3 is a small peptide derived from pVP2 C-terminus. It is not essential for the virus viability, but viral growth is affected when missing. Its function is as follows. Structural peptide 4 is a small peptide derived from pVP2 C-terminus. It is essential for the virus viability. The sequence is that of Structural polyprotein from Avian infectious bursal disease virus (strain PBG-98) (IBDV).